The sequence spans 216 residues: GTP cyclohydrolase 1 (216 aa).

3 residues coordinate Zn(2+): Cys-109, His-112, and Cys-180.

It belongs to the GTP cyclohydrolase I family. In terms of assembly, homomer.

The enzyme catalyses GTP + H2O = 7,8-dihydroneopterin 3'-triphosphate + formate + H(+). Its pathway is cofactor biosynthesis; 7,8-dihydroneopterin triphosphate biosynthesis; 7,8-dihydroneopterin triphosphate from GTP: step 1/1. In Tolumonas auensis (strain DSM 9187 / NBRC 110442 / TA 4), this protein is GTP cyclohydrolase 1.